The chain runs to 727 residues: Phosphoribosylformylglycinamidine synthase subunit PurL (727 aa).

H47 is a catalytic residue. ATP-binding residues include Y50 and K89. E91 contacts Mg(2+). Substrate contacts are provided by residues 92 to 95 and R114; that span reads SHNH. The active-site Proton acceptor is H93. D115 contributes to the Mg(2+) binding site. A substrate-binding site is contributed by Q238. D266 provides a ligand contact to Mg(2+). 310 to 312 serves as a coordination point for substrate; sequence ESQ. Residues D490 and G527 each coordinate ATP. Residue N528 coordinates Mg(2+). S530 is a binding site for substrate.

Belongs to the FGAMS family. As to quaternary structure, monomer. Part of the FGAM synthase complex composed of 1 PurL, 1 PurQ and 2 PurS subunits.

The protein localises to the cytoplasm. The catalysed reaction is N(2)-formyl-N(1)-(5-phospho-beta-D-ribosyl)glycinamide + L-glutamine + ATP + H2O = 2-formamido-N(1)-(5-O-phospho-beta-D-ribosyl)acetamidine + L-glutamate + ADP + phosphate + H(+). The protein operates within purine metabolism; IMP biosynthesis via de novo pathway; 5-amino-1-(5-phospho-D-ribosyl)imidazole from N(2)-formyl-N(1)-(5-phospho-D-ribosyl)glycinamide: step 1/2. Its function is as follows. Part of the phosphoribosylformylglycinamidine synthase complex involved in the purines biosynthetic pathway. Catalyzes the ATP-dependent conversion of formylglycinamide ribonucleotide (FGAR) and glutamine to yield formylglycinamidine ribonucleotide (FGAM) and glutamate. The FGAM synthase complex is composed of three subunits. PurQ produces an ammonia molecule by converting glutamine to glutamate. PurL transfers the ammonia molecule to FGAR to form FGAM in an ATP-dependent manner. PurS interacts with PurQ and PurL and is thought to assist in the transfer of the ammonia molecule from PurQ to PurL. The protein is Phosphoribosylformylglycinamidine synthase subunit PurL of Acidiphilium cryptum (strain JF-5).